The chain runs to 513 residues: cAMP-regulated M3R protein (513 aa).

It to D.discoideum protein M3L.

This chain is cAMP-regulated M3R protein (prtB), found in Dictyostelium discoideum (Social amoeba).